A 280-amino-acid polypeptide reads, in one-letter code: Succinate dehydrogenase [ubiquinone] iron-sulfur subunit, mitochondrial (280 aa).

The N-terminal 28 residues, 1–28 (MAAVVAVSLKRWFPATTLGGACLQACRG), are a transit peptide targeting the mitochondrion. The region spanning 40–131 (KKFAIYRWDP…DKVSKIYPLP (92 aa)) is the 2Fe-2S ferredoxin-type domain. N6-acetyllysine occurs at positions 51 and 55. C93, C98, C101, and C113 together coordinate [2Fe-2S] cluster. Residues 146-218 (FYAQYKSIEP…PAVLMQAYRW (73 aa)) are interaction with SDHAF1. One can recognise a 4Fe-4S ferredoxin-type domain in the interval 176 to 206 (EREKLDGLYECILCACCSTSCPSYWWNGDKY). 3 residues coordinate [4Fe-4S] cluster: C186, C189, and C192. C196 provides a ligand contact to [3Fe-4S] cluster. A ubiquinone is bound at residue W201. 2 residues coordinate [3Fe-4S] cluster: C243 and C249. C253 serves as a coordination point for [4Fe-4S] cluster.

It belongs to the succinate dehydrogenase/fumarate reductase iron-sulfur protein family. Component of complex II composed of four subunits: the flavoprotein (FP) SDHA, iron-sulfur protein (IP) SDHB, and a cytochrome b560 composed of SDHC and SDHD. Interacts with SDHAF1; the interaction is required for iron-sulfur cluster incorporation into SDHB. [2Fe-2S] cluster is required as a cofactor. Requires [3Fe-4S] cluster as cofactor. It depends on [4Fe-4S] cluster as a cofactor.

Its subcellular location is the mitochondrion inner membrane. The enzyme catalyses a quinone + succinate = fumarate + a quinol. It catalyses the reaction (R)-malate + a quinone = enol-oxaloacetate + a quinol. The catalysed reaction is (S)-malate + a quinone = enol-oxaloacetate + a quinol. It functions in the pathway carbohydrate metabolism; tricarboxylic acid cycle; fumarate from succinate (eukaryal route): step 1/1. Enol-oxaloacetate inhibits the succinate dehydrogenase activity. Iron-sulfur protein (IP) subunit of the succinate dehydrogenase complex (mitochondrial respiratory chain complex II), responsible for transferring electrons from succinate to ubiquinone (coenzyme Q). SDH also oxidizes malate to the non-canonical enol form of oxaloacetate, enol-oxaloacetate. Enol-oxaloacetate, which is a potent inhibitor of the succinate dehydrogenase activity, is further isomerized into keto-oxaloacetate. The sequence is that of Succinate dehydrogenase [ubiquinone] iron-sulfur subunit, mitochondrial (SDHB) from Sus scrofa (Pig).